Consider the following 475-residue polypeptide: Probable pectate lyase 7 (475 aa).

A signal peptide spans 1 to 24 (METARLFKLVCVICIASLIPTIRA). N-linked (GlcNAc...) asparagine glycans are attached at residues N67 and N96. Residues 91–117 (ISSPTNSTRRSLTGRGKGKGKGKWSKL) form a disordered region. Positions 271, 295, and 299 each coordinate Ca(2+). R351 is a catalytic residue.

This sequence belongs to the polysaccharide lyase 1 family. Ca(2+) serves as cofactor.

It catalyses the reaction Eliminative cleavage of (1-&gt;4)-alpha-D-galacturonan to give oligosaccharides with 4-deoxy-alpha-D-galact-4-enuronosyl groups at their non-reducing ends.. The protein operates within glycan metabolism; pectin degradation; 2-dehydro-3-deoxy-D-gluconate from pectin: step 2/5. The sequence is that of Probable pectate lyase 7 from Arabidopsis thaliana (Mouse-ear cress).